The following is a 495-amino-acid chain: Lysine--tRNA ligase (495 aa).

Mg(2+) is bound by residues E406 and E413.

The protein belongs to the class-II aminoacyl-tRNA synthetase family. As to quaternary structure, homodimer. It depends on Mg(2+) as a cofactor.

The protein resides in the cytoplasm. The catalysed reaction is tRNA(Lys) + L-lysine + ATP = L-lysyl-tRNA(Lys) + AMP + diphosphate. This Staphylococcus saprophyticus subsp. saprophyticus (strain ATCC 15305 / DSM 20229 / NCIMB 8711 / NCTC 7292 / S-41) protein is Lysine--tRNA ligase.